A 464-amino-acid polypeptide reads, in one-letter code: Protein FAM90A18 (464 aa).

Disordered stretches follow at residues 1 to 42 (MMAR…DPRL), 70 to 387 (PATL…ASHD), and 415 to 437 (HSPEKPGAFLAQSPHVSEKSEAP). Basic and acidic residues-rich tracts occupy residues 74-89 (GKKEGKENLKPWKPRV) and 97-114 (NKDKGEKEERPRQQDPQR). The span at 180–197 (LASLSPLRKASLSSSSSL) shows a compositional bias: low complexity.

It belongs to the FAM90 family.

In Homo sapiens (Human), this protein is Protein FAM90A18.